A 1218-amino-acid polypeptide reads, in one-letter code: Coatomer subunit alpha-2 (1218 aa).

WD repeat units lie at residues 7 to 48, 49 to 88, 91 to 132, 133 to 172, 202 to 241, 246 to 285, 288 to 326, and 363 to 404; these read TKSN…DRFD, EHDGPVRGVHFHATQPLFVSGGDDYKIKVWNYKTHRCLFT, GHLD…AVLT, GHNHYVMCASFHPKEDLVVSASLDQTVRVWDISALRKKSV, GHDRGVNWASFHPTLPLIVSGADDRQVKIWRMNDTKAWEV, GHMNNVSCVMFHAKQDIIVSNSEDKSIRIWDATKRTGIQT, REHDRFWILSAHPEMNLLAAGHDSGMIVFKLERERPAFS, and SLNQ…AGRA. Positions 855-876 are disordered; that stretch reads MANGGDGFDAEEGEANEEDGEE. Acidic residues predominate over residues 862-876; the sequence is FDAEEGEANEEDGEE.

Oligomeric complex that consists of at least the alpha, beta, beta', gamma, delta, epsilon and zeta subunits.

Its subcellular location is the cytoplasm. It is found in the golgi apparatus membrane. It localises to the cytoplasmic vesicle. The protein localises to the COPI-coated vesicle membrane. Functionally, the coatomer is a cytosolic protein complex that binds to dilysine motifs and reversibly associates with Golgi non-clathrin-coated vesicles, which further mediate biosynthetic protein transport from the ER, via the Golgi up to the trans Golgi network. Coatomer complex is required for budding from Golgi membranes, and is essential for the retrograde Golgi-to-ER transport of dilysine-tagged proteins. The polypeptide is Coatomer subunit alpha-2 (Oryza sativa subsp. japonica (Rice)).